The primary structure comprises 355 residues: UPF0421 protein BCE33L2478 (355 aa).

4 helical membrane-spanning segments follow: residues 19-39 (IAVF…IFAV), 74-94 (FTFF…FTIV), 109-129 (TLTA…AFLI), and 131-151 (LATT…ILPP).

The protein belongs to the UPF0421 family.

Its subcellular location is the cell membrane. The polypeptide is UPF0421 protein BCE33L2478 (Bacillus cereus (strain ZK / E33L)).